The chain runs to 82 residues: Cytochrome b559 subunit alpha (82 aa).

Residues 21-35 (VIHSITIPALFIAGW) traverse the membrane as a helical segment. His-23 contributes to the heme binding site.

This sequence belongs to the PsbE/PsbF family. In terms of assembly, heterodimer of an alpha subunit and a beta subunit. PSII is composed of 1 copy each of membrane proteins PsbA, PsbB, PsbC, PsbD, PsbE, PsbF, PsbH, PsbI, PsbJ, PsbK, PsbL, PsbM, PsbT, PsbX, PsbY, PsbZ, Psb30/Ycf12, peripheral proteins PsbO, CyanoQ (PsbQ), PsbU, PsbV and a large number of cofactors. It forms dimeric complexes. Heme b serves as cofactor.

Its subcellular location is the cellular thylakoid membrane. Its function is as follows. This b-type cytochrome is tightly associated with the reaction center of photosystem II (PSII). PSII is a light-driven water:plastoquinone oxidoreductase that uses light energy to abstract electrons from H(2)O, generating O(2) and a proton gradient subsequently used for ATP formation. It consists of a core antenna complex that captures photons, and an electron transfer chain that converts photonic excitation into a charge separation. This Nostoc sp. (strain PCC 7120 / SAG 25.82 / UTEX 2576) protein is Cytochrome b559 subunit alpha.